Reading from the N-terminus, the 478-residue chain is Puromycin-sensitive aminopeptidase-like protein (478 aa).

Residues Glu180 and 316 to 320 each bind substrate; that span reads GAMEN. His352 serves as a coordination point for Zn(2+). Glu353 acts as the Proton acceptor in catalysis. Zn(2+) is bound by residues His356 and Glu375.

It belongs to the peptidase M1 family. Zn(2+) is required as a cofactor.

Its function is as follows. Aminopeptidase with broad substrate specificity to several peptides. This Homo sapiens (Human) protein is Puromycin-sensitive aminopeptidase-like protein (NPEPPSL1).